The chain runs to 299 residues: Oxygen-dependent coproporphyrinogen-III oxidase (299 aa).

Residue serine 92 coordinates substrate. A divalent metal cation contacts are provided by histidine 96 and histidine 106. The active-site Proton donor is the histidine 106. Substrate is bound at residue asparagine 108 to arginine 110. 2 residues coordinate a divalent metal cation: histidine 145 and histidine 175. The important for dimerization stretch occupies residues tyrosine 240–glutamate 275. Glycine 258–arginine 260 contributes to the substrate binding site.

The protein belongs to the aerobic coproporphyrinogen-III oxidase family. In terms of assembly, homodimer. It depends on a divalent metal cation as a cofactor.

The protein localises to the cytoplasm. It carries out the reaction coproporphyrinogen III + O2 + 2 H(+) = protoporphyrinogen IX + 2 CO2 + 2 H2O. It participates in porphyrin-containing compound metabolism; protoporphyrin-IX biosynthesis; protoporphyrinogen-IX from coproporphyrinogen-III (O2 route): step 1/1. Involved in the heme biosynthesis. Catalyzes the aerobic oxidative decarboxylation of propionate groups of rings A and B of coproporphyrinogen-III to yield the vinyl groups in protoporphyrinogen-IX. The polypeptide is Oxygen-dependent coproporphyrinogen-III oxidase (Klebsiella pneumoniae (strain 342)).